Here is a 477-residue protein sequence, read N- to C-terminus: Aspartyl/glutamyl-tRNA(Asn/Gln) amidotransferase subunit B (477 aa).

This sequence belongs to the GatB/GatE family. GatB subfamily. In terms of assembly, heterotrimer of A, B and C subunits.

The catalysed reaction is L-glutamyl-tRNA(Gln) + L-glutamine + ATP + H2O = L-glutaminyl-tRNA(Gln) + L-glutamate + ADP + phosphate + H(+). The enzyme catalyses L-aspartyl-tRNA(Asn) + L-glutamine + ATP + H2O = L-asparaginyl-tRNA(Asn) + L-glutamate + ADP + phosphate + 2 H(+). Its function is as follows. Allows the formation of correctly charged Asn-tRNA(Asn) or Gln-tRNA(Gln) through the transamidation of misacylated Asp-tRNA(Asn) or Glu-tRNA(Gln) in organisms which lack either or both of asparaginyl-tRNA or glutaminyl-tRNA synthetases. The reaction takes place in the presence of glutamine and ATP through an activated phospho-Asp-tRNA(Asn) or phospho-Glu-tRNA(Gln). In Clostridium tetani (strain Massachusetts / E88), this protein is Aspartyl/glutamyl-tRNA(Asn/Gln) amidotransferase subunit B.